We begin with the raw amino-acid sequence, 194 residues long: ATP-dependent Clp protease proteolytic subunit (194 aa).

The active-site Nucleophile is the Ser99. Residue His124 is part of the active site.

This sequence belongs to the peptidase S14 family. Fourteen ClpP subunits assemble into 2 heptameric rings which stack back to back to give a disk-like structure with a central cavity, resembling the structure of eukaryotic proteasomes.

The protein resides in the cytoplasm. It catalyses the reaction Hydrolysis of proteins to small peptides in the presence of ATP and magnesium. alpha-casein is the usual test substrate. In the absence of ATP, only oligopeptides shorter than five residues are hydrolyzed (such as succinyl-Leu-Tyr-|-NHMec, and Leu-Tyr-Leu-|-Tyr-Trp, in which cleavage of the -Tyr-|-Leu- and -Tyr-|-Trp bonds also occurs).. In terms of biological role, cleaves peptides in various proteins in a process that requires ATP hydrolysis. Has a chymotrypsin-like activity. Plays a major role in the degradation of misfolded proteins. The sequence is that of ATP-dependent Clp protease proteolytic subunit from Clostridium perfringens (strain ATCC 13124 / DSM 756 / JCM 1290 / NCIMB 6125 / NCTC 8237 / Type A).